Reading from the N-terminus, the 372-residue chain is Cytochrome b (372 aa).

The next 4 membrane-spanning stretches (helical) occupy residues Phe25–Met45, Trp69–Val90, Trp105–Leu125, and Phe170–Met190. 2 residues coordinate heme b: His75 and His89. Residues His174 and His188 each contribute to the heme b site. His193 serves as a coordination point for a ubiquinone. Helical transmembrane passes span Tyr218–Ile238, Leu280–His300, Phe312–Thr332, and Tyr339–Pro358.

The protein belongs to the cytochrome b family. As to quaternary structure, the cytochrome bc1 complex contains 3 respiratory subunits (MT-CYB, CYC1 and UQCRFS1), 2 core proteins (UQCRC1 and UQCRC2) and probably 6 low-molecular weight proteins. The cofactor is heme b.

The protein resides in the mitochondrion inner membrane. Its function is as follows. Component of the ubiquinol-cytochrome c reductase complex (complex III or cytochrome b-c1 complex) that is part of the mitochondrial respiratory chain. The b-c1 complex mediates electron transfer from ubiquinol to cytochrome c. Contributes to the generation of a proton gradient across the mitochondrial membrane that is then used for ATP synthesis. The sequence is that of Cytochrome b (MT-CYB) from Acrantophis dumerili (Dumeril's ground boa).